The following is a 601-amino-acid chain: Glutamine--fructose-6-phosphate aminotransferase [isomerizing] (601 aa).

The active-site Nucleophile; for GATase activity is the Cys2. The Glutamine amidotransferase type-2 domain maps to 2-216 (CGIVGYIGTN…DKEIVIVTKD (215 aa)). SIS domains follow at residues 282–421 (IIDE…EIGD) and 453–591 (IAGE…VDKP). Residue Lys596 is the For Fru-6P isomerization activity of the active site.

As to quaternary structure, homodimer.

The protein localises to the cytoplasm. The catalysed reaction is D-fructose 6-phosphate + L-glutamine = D-glucosamine 6-phosphate + L-glutamate. Its function is as follows. Catalyzes the first step in hexosamine metabolism, converting fructose-6P into glucosamine-6P using glutamine as a nitrogen source. The chain is Glutamine--fructose-6-phosphate aminotransferase [isomerizing] from Listeria monocytogenes serovar 1/2a (strain ATCC BAA-679 / EGD-e).